The chain runs to 413 residues: Methylaspartate ammonia-lyase (413 aa).

Gln172 is a binding site for (2S,3S)-3-methyl-L-aspartate. Mg(2+) contacts are provided by Asp238, Glu273, and Asp307. Gln329 lines the (2S,3S)-3-methyl-L-aspartate pocket. Lys331 acts as the Proton acceptor in catalysis. Residue 360–361 (TC) coordinates (2S,3S)-3-methyl-L-aspartate.

The protein belongs to the methylaspartate ammonia-lyase family. As to quaternary structure, homodimer. Mg(2+) serves as cofactor.

The catalysed reaction is (2S,3S)-3-methyl-L-aspartate = mesaconate + NH4(+). It participates in amino-acid degradation; L-glutamate degradation via mesaconate pathway; acetate and pyruvate from L-glutamate: step 2/4. Involved in the methylaspartate cycle. Catalyzes the formation of the alpha,beta-unsaturated bond by the reversible anti elimination of ammonia from L-threo-beta-methylaspartate (L-threo-(2S,3S)-3-methylaspartate) to give mesaconate. This Citrobacter amalonaticus protein is Methylaspartate ammonia-lyase.